Consider the following 246-residue polypeptide: Small ribosomal subunit protein uS2 (246 aa).

Residues 226–246 (QGEEEAEVAEETAPETETTTA) are disordered. Residues 229 to 239 (EEAEVAEETAP) show a composition bias toward acidic residues.

This sequence belongs to the universal ribosomal protein uS2 family. Part of the 30S ribosomal subunit. Interacts with BrxC.

This Bacillus subtilis (strain 168) protein is Small ribosomal subunit protein uS2 (rpsB).